The chain runs to 536 residues: Putative ATP-dependent RNA helicase L364 (536 aa).

The Helicase ATP-binding domain maps to isoleucine 47–proline 214. Serine 60 to threonine 67 lines the ATP pocket. A DEAH box motif is present at residues aspartate 160–histidine 163. Residues leucine 288–lysine 334 are a coiled coil. Positions phenylalanine 338–glutamate 486 constitute a Helicase C-terminal domain. A disordered region spans residues valine 502–valine 536.

The protein belongs to the DEAD box helicase family. DEAH subfamily.

The enzyme catalyses ATP + H2O = ADP + phosphate + H(+). This is Putative ATP-dependent RNA helicase L364 from Acanthamoeba polyphaga (Amoeba).